The primary structure comprises 243 residues: MNSTQDTIYAQACEHISDFQFDDRVAGVFSDMIRRSVPGYGQIINTLGDFADKCVTPNSKIYDLGCSLGAATLSVRRRIEGRGCEIIAVDNSESMIERCKQNLSAYVSETPVDLICADIRDIEIQDASMVILNFTMQFLAPEDRQTLIAKIYQGLKPGGILVLSEKLVFEDEPVQHLLDELHLDFKRANGYSELEISQKRSSLEHVMKPDTLPQHQQRLKAQGFSHFSVWFQCFNFASMVAIK.

S-adenosyl-L-methionine is bound by residues Tyr40, 65 to 67, 90 to 91, 118 to 119, Asn133, and Arg200; these read GCS, DN, and DI.

This sequence belongs to the class I-like SAM-binding methyltransferase superfamily. Cx-SAM synthase family. In terms of assembly, homodimer.

The enzyme catalyses prephenate + S-adenosyl-L-methionine = carboxy-S-adenosyl-L-methionine + 3-phenylpyruvate + H2O. In terms of biological role, catalyzes the conversion of S-adenosyl-L-methionine (SAM) to carboxy-S-adenosyl-L-methionine (Cx-SAM). The protein is Carboxy-S-adenosyl-L-methionine synthase of Shewanella loihica (strain ATCC BAA-1088 / PV-4).